The chain runs to 157 residues: 6,7-dimethyl-8-ribityllumazine synthase (157 aa).

5-amino-6-(D-ribitylamino)uracil is bound by residues phenylalanine 22, 56–58 (AFE), and 81–83 (VLI). 86-87 (ET) is a (2S)-2-hydroxy-3-oxobutyl phosphate binding site. Histidine 89 acts as the Proton donor in catalysis. Residue phenylalanine 114 participates in 5-amino-6-(D-ribitylamino)uracil binding. (2S)-2-hydroxy-3-oxobutyl phosphate is bound at residue arginine 128.

This sequence belongs to the DMRL synthase family.

The enzyme catalyses (2S)-2-hydroxy-3-oxobutyl phosphate + 5-amino-6-(D-ribitylamino)uracil = 6,7-dimethyl-8-(1-D-ribityl)lumazine + phosphate + 2 H2O + H(+). Its pathway is cofactor biosynthesis; riboflavin biosynthesis; riboflavin from 2-hydroxy-3-oxobutyl phosphate and 5-amino-6-(D-ribitylamino)uracil: step 1/2. Functionally, catalyzes the formation of 6,7-dimethyl-8-ribityllumazine by condensation of 5-amino-6-(D-ribitylamino)uracil with 3,4-dihydroxy-2-butanone 4-phosphate. This is the penultimate step in the biosynthesis of riboflavin. In Chlamydia muridarum (strain MoPn / Nigg), this protein is 6,7-dimethyl-8-ribityllumazine synthase.